Here is a 97-residue protein sequence, read N- to C-terminus: MKFFAIAALFAAAAVAQPLEDRSNGNGNVCPPGLFSNPQCCATQVLGLIGLDCKVPSQNVYDGTDFRNVCAKTGAQPLCCVAPVAGQALLCQTAVGA.

Positions Met-1–Ala-16 are cleaved as a signal peptide. The propeptide occupies Gln-17–Arg-22. Disulfide bonds link Cys-30-Cys-79, Cys-40-Cys-70, Cys-41-Cys-53, and Cys-80-Cys-91.

The protein belongs to the cerato-ulmin hydrophobin family. As to quaternary structure, homotetramer. Further self-assembles to form highly ordered films at water-air interfaces through intermolecular interactions.

It is found in the secreted. The protein resides in the cell wall. In terms of biological role, aerial growth, conidiation, and dispersal of filamentous fungi in the environment rely upon a capability of their secreting small amphipathic proteins called hydrophobins (HPBs) with low sequence identity. Class I can self-assemble into an outermost layer of rodlet bundles on aerial cell surfaces, conferring cellular hydrophobicity that supports fungal growth, development and dispersal; whereas Class II form highly ordered films at water-air interfaces through intermolecular interactions but contribute nothing to the rodlet structure. Hbf1 is a class II hydrophobin that has a role in hyphal development and is in particular required for the formation of aerial hyphae. This chain is Class II hydrophobin 1, found in Hypocrea jecorina (Trichoderma reesei).